Reading from the N-terminus, the 124-residue chain is Small ribosomal subunit protein uS12 (124 aa).

Position 89 is a 3-methylthioaspartic acid (Asp-89).

Belongs to the universal ribosomal protein uS12 family. In terms of assembly, part of the 30S ribosomal subunit. Contacts proteins S8 and S17. May interact with IF1 in the 30S initiation complex.

Its function is as follows. With S4 and S5 plays an important role in translational accuracy. Interacts with and stabilizes bases of the 16S rRNA that are involved in tRNA selection in the A site and with the mRNA backbone. Located at the interface of the 30S and 50S subunits, it traverses the body of the 30S subunit contacting proteins on the other side and probably holding the rRNA structure together. The combined cluster of proteins S8, S12 and S17 appears to hold together the shoulder and platform of the 30S subunit. The polypeptide is Small ribosomal subunit protein uS12 (Aeromonas hydrophila subsp. hydrophila (strain ATCC 7966 / DSM 30187 / BCRC 13018 / CCUG 14551 / JCM 1027 / KCTC 2358 / NCIMB 9240 / NCTC 8049)).